Consider the following 208-residue polypeptide: Proheparin-binding EGF-like growth factor (208 aa).

A signal peptide spans 1–23 (MKLLPSVMLKLFLAAVLSALVTG). Residues 24 to 62 (ESLERLRRGLAAATSNPDPPTGSTNQLLPTGGDRAQGVQ) constitute a propeptide that is removed on maturation. The Extracellular segment spans residues 24-160 (ESLERLRRGL…ENPLYTYDHT (137 aa)). Disordered stretches follow at residues 35–57 (AATS…GGDR) and 80–104 (PQGL…LGKK). Polar residues predominate over residues 36-51 (ATSNPDPPTGSTNQLL). A glycan (O-linked (GalNAc...) threonine) is linked at threonine 85. Positions 91–102 (NGKKKKKGKGLG) are enriched in basic residues. The EGF-like domain maps to 104–144 (KRDPCLRKYKDYCIHGECRYLQEFRTPSCKCLPGYHGHRCH). Disulfide bonds link cysteine 108-cysteine 121, cysteine 116-cysteine 132, and cysteine 134-cysteine 143. Residues 149–208 (PVENPLYTYDHTTVLAVVAVVLSSVCLLVIVGLLMFRYHRRGGYDLESEEKVKLGVASSH) constitute a propeptide, C-terminal. A helical membrane pass occupies residues 161–184 (TVLAVVAVVLSSVCLLVIVGLLMF). Topologically, residues 185–208 (RYHRRGGYDLESEEKVKLGVASSH) are cytoplasmic.

In terms of assembly, interacts with FBLN1. Interacts with EGFR and ERBB4. In terms of processing, O-glycosylated. As to expression, most abundant in kidney, skeletal muscle, lung, spleen, brain and heart.

It is found in the secreted. The protein localises to the extracellular space. Its subcellular location is the cell membrane. Growth factor that mediates its effects via EGFR, ERBB2 and ERBB4. Required for normal cardiac valve formation and normal heart function. Promotes smooth muscle cell proliferation. May be involved in macrophage-mediated cellular proliferation. It is mitogenic for fibroblasts, but not endothelial cells. It is able to bind EGF receptor/EGFR with higher affinity than EGF itself and is a far more potent mitogen for smooth muscle cells than EGF. Also acts as a diphtheria toxin receptor. The protein is Proheparin-binding EGF-like growth factor (Hbegf) of Mus musculus (Mouse).